Consider the following 300-residue polypeptide: Ornithine carbamoyltransferase (300 aa).

Residues 50–53 (STRT), Gln77, Arg101, and 128–131 (HPCQ) contribute to the carbamoyl phosphate site. L-ornithine is bound by residues Asn159, Asp219, and 223–224 (SM). Carbamoyl phosphate is bound by residues 257–258 (CL) and Arg285.

This sequence belongs to the aspartate/ornithine carbamoyltransferase superfamily. OTCase family.

It is found in the cytoplasm. It carries out the reaction carbamoyl phosphate + L-ornithine = L-citrulline + phosphate + H(+). It functions in the pathway amino-acid degradation; L-arginine degradation via ADI pathway; carbamoyl phosphate from L-arginine: step 2/2. Reversibly catalyzes the transfer of the carbamoyl group from carbamoyl phosphate (CP) to the N(epsilon) atom of ornithine (ORN) to produce L-citrulline. This chain is Ornithine carbamoyltransferase, found in Haloquadratum walsbyi (strain DSM 16790 / HBSQ001).